Reading from the N-terminus, the 312-residue chain is Methionyl-tRNA formyltransferase (312 aa).

109 to 112 provides a ligand contact to (6S)-5,6,7,8-tetrahydrofolate; it reads SLLP.

It belongs to the Fmt family.

The catalysed reaction is L-methionyl-tRNA(fMet) + (6R)-10-formyltetrahydrofolate = N-formyl-L-methionyl-tRNA(fMet) + (6S)-5,6,7,8-tetrahydrofolate + H(+). Its function is as follows. Attaches a formyl group to the free amino group of methionyl-tRNA(fMet). The formyl group appears to play a dual role in the initiator identity of N-formylmethionyl-tRNA by promoting its recognition by IF2 and preventing the misappropriation of this tRNA by the elongation apparatus. In Anaeromyxobacter dehalogenans (strain 2CP-C), this protein is Methionyl-tRNA formyltransferase.